The following is a 403-amino-acid chain: CCA-adding enzyme (403 aa).

ATP contacts are provided by glycine 32 and arginine 35. Glycine 32 and arginine 35 together coordinate CTP. 2 residues coordinate Mg(2+): aspartate 45 and aspartate 47. The ATP site is built by arginine 116, aspartate 159, arginine 162, arginine 165, and arginine 168. The CTP site is built by arginine 116, aspartate 159, arginine 162, arginine 165, and arginine 168.

It belongs to the tRNA nucleotidyltransferase/poly(A) polymerase family. Bacterial CCA-adding enzyme type 3 subfamily. Homodimer. Mg(2+) is required as a cofactor.

It carries out the reaction a tRNA precursor + 2 CTP + ATP = a tRNA with a 3' CCA end + 3 diphosphate. The catalysed reaction is a tRNA with a 3' CCA end + 2 CTP + ATP = a tRNA with a 3' CCACCA end + 3 diphosphate. Functionally, catalyzes the addition and repair of the essential 3'-terminal CCA sequence in tRNAs without using a nucleic acid template. Adds these three nucleotides in the order of C, C, and A to the tRNA nucleotide-73, using CTP and ATP as substrates and producing inorganic pyrophosphate. tRNA 3'-terminal CCA addition is required both for tRNA processing and repair. Also involved in tRNA surveillance by mediating tandem CCA addition to generate a CCACCA at the 3' terminus of unstable tRNAs. While stable tRNAs receive only 3'-terminal CCA, unstable tRNAs are marked with CCACCA and rapidly degraded. This chain is CCA-adding enzyme, found in Limosilactobacillus reuteri (strain DSM 20016) (Lactobacillus reuteri).